The following is a 92-amino-acid chain: Acylphosphatase (92 aa).

An Acylphosphatase-like domain is found at 5–92 (CIAAYVYGVV…TPFETFKIRY (88 aa)). Active-site residues include R20 and N38.

The protein belongs to the acylphosphatase family.

The enzyme catalyses an acyl phosphate + H2O = a carboxylate + phosphate + H(+). This chain is Acylphosphatase (acyP), found in Yersinia enterocolitica serotype O:8 / biotype 1B (strain NCTC 13174 / 8081).